Here is a 737-residue protein sequence, read N- to C-terminus: Acetylcholinesterase (737 aa).

An N-terminal signal peptide occupies residues 1–38; it reads MEIRGLLMGRLRLGRRMVPLGLLGVTALLLILPPFALV. The interval 141 to 168 is disordered; that stretch reads HSGATPRRRGLTRRESNSDANDNDPLVV. An N-linked (GlcNAc...) asparagine glycan is attached at asparagine 220. Cysteine 228 and cysteine 255 are joined by a disulfide. Serine 360 functions as the Acyl-ester intermediate in the catalytic mechanism. Residues cysteine 414 and cysteine 427 are joined by a disulfide bond. Residues glutamate 486 and histidine 600 each act as charge relay system in the active site. Cysteine 562 and cysteine 683 are joined by a disulfide. Asparagine 670 carries N-linked (GlcNAc...) asparagine glycosylation.

This sequence belongs to the type-B carboxylesterase/lipase family.

The protein resides in the synapse. It carries out the reaction acetylcholine + H2O = choline + acetate + H(+). In terms of biological role, rapidly hydrolyzes choline released into the synapse. The sequence is that of Acetylcholinesterase (Ace) from Anopheles gambiae (African malaria mosquito).